Reading from the N-terminus, the 118-residue chain is Small ribosomal subunit protein uS13 (118 aa).

The tract at residues 94–118 (GLPLRGQRTRTNARTRKGPRKAIRK) is disordered.

This sequence belongs to the universal ribosomal protein uS13 family. In terms of assembly, part of the 30S ribosomal subunit. Forms a loose heterodimer with protein S19. Forms two bridges to the 50S subunit in the 70S ribosome.

Its function is as follows. Located at the top of the head of the 30S subunit, it contacts several helices of the 16S rRNA. In the 70S ribosome it contacts the 23S rRNA (bridge B1a) and protein L5 of the 50S subunit (bridge B1b), connecting the 2 subunits; these bridges are implicated in subunit movement. Contacts the tRNAs in the A and P-sites. This is Small ribosomal subunit protein uS13 from Xanthomonas axonopodis pv. citri (strain 306).